We begin with the raw amino-acid sequence, 537 residues long: MVHFIFVTGGVVSSLGKGLTAASLAMLLQAKGFRVSVRKLDPYLNIDPGTMNPHEHGEVYVTDDGAETDLDLGHYERFTGVSACKFDSITTGAIYSKLLKDERLGNYAGVTVQVIPHVTNIIKDFILSNTKGVDFIICEIGGTVGDIEGLPFFEAIRQIGNQLKSENCLFIHLTLLPYVKTARELKIKPTQHSVKALRAIGISPNILVCRAERNISKGEIDKISLLCNIESEYVVPAIDQKNIYLVPIAYHNSGLDNKVLKFFNINIMPSKLDKWHDIINRLKDSNSKVRIAIIAKYHKLKDAYKSVIEALDHAGIYYKYKIDLVWINAENLTEENINKKLLDIDGILVPGGFGERATKGKIIAIKYARTNNIPFFGICFGMQLATIEIAQNLIGIKDAVTEEFKVDGTKIIEKINKNCEDSKITIENVKKTMRLGSYPCSLVAGTIAANAYKSLEINERHRHRYKFNNEFQNIFEKHGIVFSGFSKDEEIVEIIELPLLRWFVGVQFHPEFKSKPFEAHPLFIQFIKAAIEYNKCN.

Residues 1-265 are amidoligase domain; sequence MVHFIFVTGG…DNKVLKFFNI (265 aa). Serine 13 contributes to the CTP binding site. Serine 13 lines the UTP pocket. ATP-binding positions include 14 to 19 and aspartate 71; that span reads SLGKGL. The Mg(2+) site is built by aspartate 71 and glutamate 139. Residues 146-148 and lysine 222 contribute to the CTP site; that span reads DIE. UTP is bound at residue lysine 222. One can recognise a Glutamine amidotransferase type-1 domain in the interval 290-536; sequence RIAIIAKYHK…IKAAIEYNKC (247 aa). Glycine 352 provides a ligand contact to L-glutamine. Cysteine 379 (nucleophile; for glutamine hydrolysis) is an active-site residue. L-glutamine contacts are provided by residues 380–383, glutamate 403, and arginine 464; that span reads FGMQ. Residues histidine 509 and glutamate 511 contribute to the active site.

The protein belongs to the CTP synthase family. As to quaternary structure, homotetramer.

The enzyme catalyses UTP + L-glutamine + ATP + H2O = CTP + L-glutamate + ADP + phosphate + 2 H(+). The catalysed reaction is L-glutamine + H2O = L-glutamate + NH4(+). It carries out the reaction UTP + NH4(+) + ATP = CTP + ADP + phosphate + 2 H(+). It functions in the pathway pyrimidine metabolism; CTP biosynthesis via de novo pathway; CTP from UDP: step 2/2. Allosterically activated by GTP, when glutamine is the substrate; GTP has no effect on the reaction when ammonia is the substrate. The allosteric effector GTP functions by stabilizing the protein conformation that binds the tetrahedral intermediate(s) formed during glutamine hydrolysis. Inhibited by the product CTP, via allosteric rather than competitive inhibition. Catalyzes the ATP-dependent amination of UTP to CTP with either L-glutamine or ammonia as the source of nitrogen. Regulates intracellular CTP levels through interactions with the four ribonucleotide triphosphates. In Rickettsia peacockii (strain Rustic), this protein is CTP synthase.